The primary structure comprises 399 residues: Argininosuccinate synthase (399 aa).

Residue 9-17 (AYSGGLDTS) participates in ATP binding. Tyr-88 contributes to the L-citrulline binding site. Residue Gly-118 participates in ATP binding. L-aspartate-binding residues include Thr-120, Asn-124, and Asp-125. Asn-124 is a binding site for L-citrulline. Positions 128, 176, 261, and 273 each coordinate L-citrulline.

It belongs to the argininosuccinate synthase family. Type 1 subfamily. As to quaternary structure, homotetramer.

It localises to the cytoplasm. It carries out the reaction L-citrulline + L-aspartate + ATP = 2-(N(omega)-L-arginino)succinate + AMP + diphosphate + H(+). It functions in the pathway amino-acid biosynthesis; L-arginine biosynthesis; L-arginine from L-ornithine and carbamoyl phosphate: step 2/3. The sequence is that of Argininosuccinate synthase from Mycobacterium leprae (strain TN).